Consider the following 305-residue polypeptide: Phosphatidate cytidylyltransferase (305 aa).

7 helical membrane passes run 24-44, 97-117, 124-144, 151-171, 202-222, 232-252, and 277-297; these read LLVF…AFIV, PEHV…HLVF, LGPI…SVPI, LYGF…IFLI, TVVG…IFYS, IAMP…GFFG, and MLDV…ILLI.

The protein belongs to the CDS family.

It is found in the cell membrane. It catalyses the reaction a 1,2-diacyl-sn-glycero-3-phosphate + CTP + H(+) = a CDP-1,2-diacyl-sn-glycerol + diphosphate. It functions in the pathway phospholipid metabolism; CDP-diacylglycerol biosynthesis; CDP-diacylglycerol from sn-glycerol 3-phosphate: step 3/3. This is Phosphatidate cytidylyltransferase (cdsA) from Chlamydia muridarum (strain MoPn / Nigg).